The following is a 203-amino-acid chain: Outer-membrane lipoprotein LolB (203 aa).

The N-terminal stretch at 1–18 (MTLRSFLILLLSSIVLAG) is a signal peptide. A lipid anchor (N-palmitoyl cysteine) is attached at Cys-19. Cys-19 carries S-diacylglycerol cysteine lipidation.

The protein belongs to the LolB family. Monomer.

The protein resides in the cell outer membrane. Functionally, plays a critical role in the incorporation of lipoproteins in the outer membrane after they are released by the LolA protein. The sequence is that of Outer-membrane lipoprotein LolB from Vibrio campbellii (strain ATCC BAA-1116).